The following is a 399-amino-acid chain: S-adenosylmethionine synthase (399 aa).

ATP is bound at residue His-15. Asp-17 contacts Mg(2+). Glu-43 is a binding site for K(+). 2 residues coordinate L-methionine: Glu-56 and Gln-99. The interval 99–109 (QSADIAQGVDN) is flexible loop. ATP contacts are provided by residues 174 to 176 (DGK), 244 to 245 (RF), Asp-253, 259 to 260 (RK), Ala-276, and Lys-280. Asp-253 serves as a coordination point for L-methionine. L-methionine is bound at residue Lys-284.

The protein belongs to the AdoMet synthase family. As to quaternary structure, homotetramer; dimer of dimers. The cofactor is Mg(2+). It depends on K(+) as a cofactor.

It localises to the cytoplasm. It catalyses the reaction L-methionine + ATP + H2O = S-adenosyl-L-methionine + phosphate + diphosphate. It participates in amino-acid biosynthesis; S-adenosyl-L-methionine biosynthesis; S-adenosyl-L-methionine from L-methionine: step 1/1. Catalyzes the formation of S-adenosylmethionine (AdoMet) from methionine and ATP. The overall synthetic reaction is composed of two sequential steps, AdoMet formation and the subsequent tripolyphosphate hydrolysis which occurs prior to release of AdoMet from the enzyme. The sequence is that of S-adenosylmethionine synthase from Salinispora arenicola (strain CNS-205).